We begin with the raw amino-acid sequence, 317 residues long: HTH-type transcriptional repressor PA14_22550 (317 aa).

The HTH lysR-type domain occupies 1 to 59 (MDKLTAMATFVKVVDAGSFTRAADALGLPKARVSQRVSDLEKHLGVRLLNRTTRALSLT). Residues 19 to 38 (FTRAADALGLPKARVSQRVS) constitute a DNA-binding region (H-T-H motif).

The protein belongs to the LysR transcriptional regulatory family.

Represses the transcription of the operon that consists of PA14_22510 to PA14_22540. This Pseudomonas aeruginosa (strain UCBPP-PA14) protein is HTH-type transcriptional repressor PA14_22550.